A 638-amino-acid chain; its full sequence is Influenza virus NS1A-binding protein homolog (638 aa).

Residues 32–99 form the BTB domain; sequence CDVKLQVCGH…AYTSQLKAET (68 aa). Residues 134–233 enclose the BACK domain; the sequence is GISCRNFVNT…YYSADHKLLD (100 aa). The disordered stretch occupies residues 251 to 273; it reads IQKKSPRENNHKNLISSSSGSLS. Kelch repeat units follow at residues 365 to 411, 412 to 459, 461 to 508, 509 to 555, 557 to 602, and 604 to 638; these read KLIA…VLMD, HLYV…ALNG, LYVV…ELGN, KIYI…VYDG, LLVV…AVGN, and IYAA…LCES.

The protein localises to the cytoplasm. The protein resides in the cytoskeleton. It localises to the nucleus. In terms of biological role, plays a role in cell division and in the dynamic organization of the actin skeleton as a stabilizer of actin filaments by association with F-actin through Kelch repeats. This Xenopus laevis (African clawed frog) protein is Influenza virus NS1A-binding protein homolog (ivns1abp).